The following is an 82-amino-acid chain: Putative antimicrobial peptide 7848 (82 aa).

The N-terminal stretch at 1 to 17 (MNENLWAAPAPKKLSKH) is a signal peptide. Positions 16–60 (KHFFGRGGPLGKETGPNLFPKKPGAGKGLGFPPTKKPRGQPRVLK) are disordered. Residues 38–82 (PGAGKGLGFPPTKKPRGQPRVLKKPKWNSEGLIGILHRGSDGVQF) constitute a propeptide that is removed on maturation. Basic residues predominate over residues 50–60 (KKPRGQPRVLK).

Belongs to the non-disulfide-bridged peptide (NDBP) superfamily. Short antimicrobial peptide (group 4) family. Expressed by the venom gland.

It is found in the secreted. This chain is Putative antimicrobial peptide 7848, found in Urodacus yaschenkoi (Inland robust scorpion).